A 103-amino-acid polypeptide reads, in one-letter code: Small ribosomal subunit protein uS10 (103 aa).

The protein belongs to the universal ribosomal protein uS10 family. In terms of assembly, part of the 30S ribosomal subunit.

Involved in the binding of tRNA to the ribosomes. This Neisseria gonorrhoeae (strain ATCC 700825 / FA 1090) protein is Small ribosomal subunit protein uS10.